Reading from the N-terminus, the 370-residue chain is Cyanuric acid amidohydrolase (370 aa).

The tract at residues 1–103 is RU A; the sequence is MQAQVFRVPM…TIFTVQKTDN (103 aa). Substrate contacts are provided by residues Arg-51 and 82-83; that span reads SG. An RU B region spans residues 113-250; the sequence is RLAVQQIFTR…NEIIVMGNSR (138 aa). The active site involves Lys-163. Substrate contacts are provided by residues Arg-195 and 233 to 234; that span reads SA. Ser-233 acts as the Nucleophile in catalysis. Positions 256-370 are RU C; sequence LVIGHAEMKD…GPVAVIARTA (115 aa). Glu-303 provides a ligand contact to Mg(2+). Substrate-binding positions include Arg-330 and 349–350; that span reads SG. Residues Ser-352, Gln-355, Gly-356, Pro-357, and Gly-360 each coordinate Mg(2+).

It belongs to the cyclic amide hydrolase (CyAH) family. As to quaternary structure, homotetramer.

It catalyses the reaction cyanurate + H2O = 1-carboxybiuret + H(+). Its pathway is xenobiotic degradation; atrazine degradation; biuret from cyanurate: step 1/1. With respect to regulation, inhibited by barbituric acid. Its function is as follows. Responsible for the hydrolysis of cyanuric acid, an intermediate formed during catabolism of s-triazine based compounds in herbicides such as atrazine and polymers such as melamine. Catalyzes the hydrolytic opening of the s-triazine ring of cyanuric acid (2,4,6-trihydroxy-s-triazine) to yield carbon dioxide and carboxybiuret, which spontaneously decarboxylates to biuret. This Pseudomonas sp protein is Cyanuric acid amidohydrolase (trzD).